Reading from the N-terminus, the 1039-residue chain is Kinesin-like protein KIN-5B (1039 aa).

A Kinesin motor domain is found at 48 to 390 (NVQVILRCKP…LDYAYRAKNI (343 aa)). 134 to 141 (GQTGTGKT) contributes to the ATP binding site. Positions 1008 to 1039 (TLSEEHTSLEKISTKQGLGEANNRTPFLEVNK) are disordered. The span at 1010-1020 (SEEHTSLEKIS) shows a compositional bias: basic and acidic residues.

The protein belongs to the TRAFAC class myosin-kinesin ATPase superfamily. Kinesin family. KIN-5/BimC subfamily.

The protein resides in the cytoplasm. The protein localises to the cytoskeleton. It is found in the spindle. Responsible for microtubule translocation. May be important for the organization of phragmoplast-specific arrays of microtubules. Plays an essential role in stabilizing the mitotic spindle. Required during mitotic cytokinesis. This is Kinesin-like protein KIN-5B from Arabidopsis thaliana (Mouse-ear cress).